We begin with the raw amino-acid sequence, 302 residues long: Giardin subunit alpha-5 (302 aa).

Annexin repeat units follow at residues 1 to 72 (MTST…VNMW), 74 to 144 (SRHE…VAGW), 153 to 226 (GSVE…AAHF), and 230 to 298 (GLPV…TLWR).

Belongs to the annexin family. Giardin subunit alpha subfamily.

It localises to the cytoplasm. Its subcellular location is the cytoskeleton. In terms of biological role, giardins are involved in parasite attachment to the intestinal mucosa and in the cytoskeletal disassembly and reassembly that marks the transition from infectious trophozoite to transmissible cyst. They may interact with other cytoskeletal proteins such as microtubules in the microribbons or crossbridges, to maintain the integrity of the ventral disk. The protein is Giardin subunit alpha-5 of Giardia intestinalis (Giardia lamblia).